A 302-amino-acid polypeptide reads, in one-letter code: Sulfate adenylyltransferase subunit 2 (302 aa).

Residues 280–302 form a disordered region; the sequence is RQGRAIDHDQSGSMELKKRQGYF.

This sequence belongs to the PAPS reductase family. CysD subfamily. As to quaternary structure, heterodimer composed of CysD, the smaller subunit, and CysN.

The catalysed reaction is sulfate + ATP + H(+) = adenosine 5'-phosphosulfate + diphosphate. Its pathway is sulfur metabolism; hydrogen sulfide biosynthesis; sulfite from sulfate: step 1/3. Its function is as follows. With CysN forms the ATP sulfurylase (ATPS) that catalyzes the adenylation of sulfate producing adenosine 5'-phosphosulfate (APS) and diphosphate, the first enzymatic step in sulfur assimilation pathway. APS synthesis involves the formation of a high-energy phosphoric-sulfuric acid anhydride bond driven by GTP hydrolysis by CysN coupled to ATP hydrolysis by CysD. The protein is Sulfate adenylyltransferase subunit 2 of Vibrio vulnificus (strain CMCP6).